We begin with the raw amino-acid sequence, 312 residues long: Very-long-chain 3-oxoacyl-CoA reductase (312 aa).

Residues Ala-4 to Leu-24 traverse the membrane as a helical segment. Gly-50 to Leu-79 is a binding site for NADP(+). 2 helical membrane passes run Gly-182 to Tyr-202 and Gly-271 to Leu-291. Ser-189 is a substrate binding site. The active-site Proton acceptor is Tyr-202. Residues Lys-308 to Asn-312 carry the Di-lysine motif motif.

The protein belongs to the short-chain dehydrogenases/reductases (SDR) family. 17-beta-HSD 3 subfamily. As to quaternary structure, interacts with ELOVL1 and LASS2. As to expression, expressed in most tissues tested. Highly expressed in the ovary and mammary. Expressed in platelets.

The protein resides in the endoplasmic reticulum membrane. It carries out the reaction a very-long-chain (3R)-3-hydroxyacyl-CoA + NADP(+) = a very-long-chain 3-oxoacyl-CoA + NADPH + H(+). The catalysed reaction is 17beta-estradiol + NAD(+) = estrone + NADH + H(+). It catalyses the reaction 17beta-estradiol + NADP(+) = estrone + NADPH + H(+). The enzyme catalyses 3-oxooctadecanoyl-CoA + NADPH + H(+) = (3R)-hydroxyoctadecanoyl-CoA + NADP(+). It carries out the reaction (7Z,10Z,13Z,16Z)-3-oxodocosatetraenoyl-CoA + NADPH + H(+) = (3R)-hydroxy-(7Z,10Z,13Z,16Z)-docosatetraenoyl-CoA + NADP(+). The catalysed reaction is 3-oxo-(7Z,10Z,13Z,16Z,19Z)-docosapentaenoyl-CoA + NADPH + H(+) = (3R)-hydroxy-(7Z,10Z,13Z,16Z,19Z)-docosapentaenoyl-CoA + NADP(+). It catalyses the reaction (8Z,11Z,14Z)-3-oxoeicosatrienoyl-CoA + NADPH + H(+) = (3R)-hydroxy-(8Z,11Z,14Z)-eicosatrienoyl-CoA + NADP(+). Its pathway is lipid metabolism; fatty acid biosynthesis. It participates in steroid biosynthesis; estrogen biosynthesis. Functionally, catalyzes the second of the four reactions of the long-chain fatty acids elongation cycle. This endoplasmic reticulum-bound enzymatic process, allows the addition of two carbons to the chain of long- and very long-chain fatty acids/VLCFAs per cycle. This enzyme has a 3-ketoacyl-CoA reductase activity, reducing 3-ketoacyl-CoA to 3-hydroxyacyl-CoA, within each cycle of fatty acid elongation. Thereby, it may participate in the production of VLCFAs of different chain lengths that are involved in multiple biological processes as precursors of membrane lipids and lipid mediators. May also catalyze the transformation of estrone (E1) into estradiol (E2) and play a role in estrogen formation. In Homo sapiens (Human), this protein is Very-long-chain 3-oxoacyl-CoA reductase.